Reading from the N-terminus, the 302-residue chain is Nuclear egress protein 1 (302 aa).

The span at Met-1–Arg-17 shows a compositional bias: polar residues. The disordered stretch occupies residues Met-1 to Asp-22. The CCCH-type zinc finger occupies Cys-102–His-227.

Belongs to the herpesviridae NEC1 protein family. As to quaternary structure, forms a heterohexameric complex with NEC2. Interacts with capsid vertex specific component 2/CVC2; this interaction directs the capsid to the host inner nuclear membrane to initiate budding. Phosphorylated at serine residues in the N-terminus. This phosphorylation regulates the localization within the inner nuclear membrane.

It localises to the host nucleus inner membrane. Its function is as follows. Plays an essential role in virion nuclear egress, the first step of virion release from infected cell. Within the host nucleus, NEC1 interacts with the newly formed capsid through the vertexes and directs it to the inner nuclear membrane by associating with NEC2. Induces the budding of the capsid at the inner nuclear membrane as well as its envelopment into the perinuclear space. There, the NEC1/NEC2 complex promotes the fusion of the enveloped capsid with the outer nuclear membrane and the subsequent release of the viral capsid into the cytoplasm where it will reach the secondary budding sites in the host Golgi or trans-Golgi network. The sequence is that of Nuclear egress protein 1 from Homo sapiens (Human).